A 202-amino-acid polypeptide reads, in one-letter code: LexA repressor (202 aa).

The H-T-H motif DNA-binding region spans 28–48 (RAEIAQRLGFRSPNAAEEHLK). Active-site for autocatalytic cleavage activity residues include S119 and K156.

This sequence belongs to the peptidase S24 family. As to quaternary structure, homodimer.

It catalyses the reaction Hydrolysis of Ala-|-Gly bond in repressor LexA.. In terms of biological role, represses a number of genes involved in the response to DNA damage (SOS response), including recA and lexA. Binds to the 16 bp palindromic sequence 5'-CTGTATATATATACAG-3'. In the presence of single-stranded DNA, RecA interacts with LexA causing an autocatalytic cleavage which disrupts the DNA-binding part of LexA, leading to derepression of the SOS regulon and eventually DNA repair. In Enterobacter sp. (strain 638), this protein is LexA repressor.